Here is a 768-residue protein sequence, read N- to C-terminus: Probable dipeptidyl peptidase 4 (768 aa).

The N-terminal stretch at 1–17 (MKLGKWSVLLLVGCTAA) is a signal peptide. Asn38, Asn81, Asn104, Asn113, Asn221, Asn282, and Asn468 each carry an N-linked (GlcNAc...) asparagine glycan. Residue Ser616 is the Charge relay system of the active site. An N-linked (GlcNAc...) asparagine glycan is attached at Asn668. Active-site charge relay system residues include Asp693 and His728.

The protein belongs to the peptidase S9B family.

The protein resides in the secreted. It catalyses the reaction Release of an N-terminal dipeptide, Xaa-Yaa-|-Zaa-, from a polypeptide, preferentially when Yaa is Pro, provided Zaa is neither Pro nor hydroxyproline.. Its function is as follows. Extracellular dipeptidyl-peptidase which removes N-terminal dipeptides sequentially from polypeptides having unsubstituted N-termini provided that the penultimate residue is proline. In Aspergillus clavatus (strain ATCC 1007 / CBS 513.65 / DSM 816 / NCTC 3887 / NRRL 1 / QM 1276 / 107), this protein is Probable dipeptidyl peptidase 4 (dpp4).